Here is a 137-residue protein sequence, read N- to C-terminus: Nucleoside diphosphate kinase (137 aa).

The ATP site is built by Lys-9, Phe-57, Arg-85, Thr-91, Arg-102, and Asn-112. His-115 acts as the Pros-phosphohistidine intermediate in catalysis.

This sequence belongs to the NDK family. As to quaternary structure, homotetramer. It depends on Mg(2+) as a cofactor.

It localises to the cytoplasm. The enzyme catalyses a 2'-deoxyribonucleoside 5'-diphosphate + ATP = a 2'-deoxyribonucleoside 5'-triphosphate + ADP. It carries out the reaction a ribonucleoside 5'-diphosphate + ATP = a ribonucleoside 5'-triphosphate + ADP. Functionally, major role in the synthesis of nucleoside triphosphates other than ATP. The ATP gamma phosphate is transferred to the NDP beta phosphate via a ping-pong mechanism, using a phosphorylated active-site intermediate. The polypeptide is Nucleoside diphosphate kinase (Campylobacter jejuni subsp. doylei (strain ATCC BAA-1458 / RM4099 / 269.97)).